Here is a 165-residue protein sequence, read N- to C-terminus: Large ribosomal subunit protein uL30 (165 aa).

This sequence belongs to the universal ribosomal protein uL30 family. As to quaternary structure, part of the 50S ribosomal subunit.

The chain is Large ribosomal subunit protein uL30 from Thermoplasma volcanium (strain ATCC 51530 / DSM 4299 / JCM 9571 / NBRC 15438 / GSS1).